Here is a 465-residue protein sequence, read N- to C-terminus: Uronate isomerase (465 aa).

Belongs to the metallo-dependent hydrolases superfamily. Uronate isomerase family.

It carries out the reaction D-glucuronate = D-fructuronate. It catalyses the reaction aldehydo-D-galacturonate = keto-D-tagaturonate. It participates in carbohydrate metabolism; pentose and glucuronate interconversion. This is Uronate isomerase from Streptococcus equi subsp. zooepidemicus (strain MGCS10565).